Reading from the N-terminus, the 664-residue chain is MGVSVLTFHVSLFLKRILSIAFFLLSLSTLLRIVNAQQYVDNNIGSMVLSDYDFAETPSVRVQRALEILRYYYEQEDVTYEEIIIQRNHAIELLRSASHDNNTDAMLYLANIEFFGLFEIIPEIEDSVKYYDMLQKANGSAFANNMMGFFYSTSFSEYASNNPALARIHWELAAKQGSLDAHQFLAYHNLIALNMPQSDEEAVKHYKFISDHLFEEECGSNVTYLKCIWPEIQDYNFAGENGMGVYGAASAYTYSDAYQALHTRSQYLREMSNSIEDWDYELMFEVAKLRLHGMYKYPRNYTVSDVLFRKVSRQYWPYTSENSVLANTPQSIISLAAQSCGYLGLLHLFDKGPLFDIDKAYWWFKRGATKNDSNSYYGLGYMAYHGLTSNGVDREKGMRLINLAVMNENPHALMFLGLIRLEEARYEEAYHLFLRAATQKSVISYKYLADCYYNGTGTSRSMISASLYYKKFVEAIRASATSMAIALEEIDEYGYFHNSFVYYLYAAQMGYALAEINAAYLMDENKFLINSVFRYFNYTQSEQEAAHDKFAYEFYSRAAAQGDIDAIFKLGDYYYYGIGTPKDYSKAYTCYKIAYEQSSIGMGLWNMAYMHEYGIGRDQDIYIARRLLDELSSNQNSYFPLKVAIFWINIHQLYIKLLKLLRLR.

Residues 1 to 35 (MGVSVLTFHVSLFLKRILSIAFFLLSLSTLLRIVN) form the signal peptide. Residues Asn101 and Asn138 are each glycosylated (N-linked (GlcNAc...) asparagine). 2 Sel1-like repeats span residues 141–178 (AFANNMMGFFYSTSFSEYASNNPALARIHWELAAKQGS) and 179–214 (LDAHQFLAYHNLIALNMPQSDEEAVKHYKFISDHLF). Residues Asn221, Asn300, and Asn371 are each glycosylated (N-linked (GlcNAc...) asparagine). 4 Sel1-like repeats span residues 337-372 (AQSCGYLGLLHLFDKGPLFDIDKAYWWFKRGATKND), 373-409 (SNSYYGLGYMAYHGLTSNGVDREKGMRLINLAVMNEN), 410-441 (PHALMFLGLIRLEEARYEEAYHLFLRAATQKS), and 442-477 (VISYKYLADCYYNGTGTSRSMISASLYYKKFVEAIR). Residues Asn454 and Asn537 are each glycosylated (N-linked (GlcNAc...) asparagine). Sel1-like repeat units follow at residues 564–599 (IDAIFKLGDYYYYGIGTPKDYSKAYTCYKIAYEQSS) and 601–636 (GMGLWNMAYMHEYGIGRDQDIYIARRLLDELSSNQN).

It belongs to the sel-1 family.

This is an uncharacterized protein from Schizosaccharomyces pombe (strain 972 / ATCC 24843) (Fission yeast).